The sequence spans 241 residues: Uridylate kinase (241 aa).

ATP is bound at residue 15–18; the sequence is KLSG. Positions 23-28 are involved in allosteric activation by GTP; the sequence is GSEGFG. G57 is a binding site for UMP. ATP is bound by residues G58 and R62. Residues D77 and 138–145 each bind UMP; that span reads TGNPFCTT. ATP is bound by residues T165, Y171, and D174.

It belongs to the UMP kinase family. Homohexamer.

It is found in the cytoplasm. It carries out the reaction UMP + ATP = UDP + ADP. It functions in the pathway pyrimidine metabolism; CTP biosynthesis via de novo pathway; UDP from UMP (UMPK route): step 1/1. Allosterically activated by GTP. Inhibited by UTP. Its function is as follows. Catalyzes the reversible phosphorylation of UMP to UDP. This chain is Uridylate kinase, found in Shewanella amazonensis (strain ATCC BAA-1098 / SB2B).